A 227-amino-acid polypeptide reads, in one-letter code: MNSINIAIDGPASSGKSTVAKIIAKNLNYTYLDTGAMYRCATYLALQHGYEAQDVSKILGLLAERPISFGKAEDGSQTVFLGTEEVTLAIRQNDVTNNVSWVSAIPEIREELVNQQRRIAKDGAIIMDGRDIGTVVLPDAELKIFLVASVDERAERRFKENQEKGIESDFETLKSEIAARDYKDSHREVSPLEAAEDAIEFDTTGVSIEGVVTFIQEKAEKIIDMKN.

10–18 (GPASSGKST) contributes to the ATP binding site.

This sequence belongs to the cytidylate kinase family. Type 1 subfamily.

Its subcellular location is the cytoplasm. It carries out the reaction CMP + ATP = CDP + ADP. It catalyses the reaction dCMP + ATP = dCDP + ADP. This chain is Cytidylate kinase, found in Streptococcus agalactiae serotype Ia (strain ATCC 27591 / A909 / CDC SS700).